The primary structure comprises 217 residues: Putative thymidylate synthase (217 aa).

The active site involves C139.

This sequence belongs to the thymidylate synthase family. Archaeal-type ThyA subfamily. Monomer.

The protein resides in the cytoplasm. It participates in pyrimidine metabolism; dTTP biosynthesis. Functionally, may catalyze the biosynthesis of dTMP using an unknown cosubstrate. This chain is Putative thymidylate synthase, found in Methanosarcina barkeri (strain Fusaro / DSM 804).